Reading from the N-terminus, the 123-residue chain is WAP four-disulfide core domain protein 2 (123 aa).

An N-terminal signal peptide occupies residues 1 to 26 (MPACRLGLLVASLLLGLLLGLPPVTG). 2 consecutive WAP domains span residues 28-69 (GAEK…VTIC) and 72-122 (PNEK…VTPV). Cystine bridges form between Cys35–Cys61, Cys44–Cys65, Cys48–Cys60, Cys54–Cys69, Cys79–Cys109, Cys92–Cys113, Cys96–Cys108, and Cys102–Cys118.

In terms of assembly, homotrimer; disulfide-linked. Detected in the distal parts of the epididymis.

It is found in the secreted. In terms of biological role, broad range protease inhibitor. This is WAP four-disulfide core domain protein 2 (WFDC2) from Sus scrofa (Pig).